The following is a 609-amino-acid chain: Alpha-fetoprotein (609 aa).

A signal peptide spans 1 to 18 (MKWVESIFLIFLLNFTES). Albumin domains are found at residues 19–210 (RTLH…ATVT), 211–402 (KELR…EELQ), and 403–601 (KYIQ…KLIS). A Cu(2+)-binding site is contributed by histidine 22. Asparagine 42 carries an N-linked (GlcNAc...) asparagine glycan. Intrachain disulfides connect cysteine 99–cysteine 114, cysteine 113–cysteine 124, cysteine 148–cysteine 193, cysteine 192–cysteine 201, cysteine 224–cysteine 270, cysteine 269–cysteine 277, cysteine 289–cysteine 303, and cysteine 302–cysteine 313. Phosphoserine is present on residues serine 111, serine 115, and serine 117. Asparagine 251 carries an N-linked (GlcNAc...) asparagine glycan. At serine 344 the chain carries Phosphoserine. 7 disulfides stabilise this stretch: cysteine 384/cysteine 393, cysteine 416/cysteine 462, cysteine 461/cysteine 472, cysteine 485/cysteine 501, cysteine 500/cysteine 511, cysteine 538/cysteine 583, and cysteine 582/cysteine 591. Position 444 is a phosphoserine (serine 444).

It belongs to the ALB/AFP/VDB family. As to quaternary structure, dimeric and trimeric forms have been found in addition to the monomeric form. As to expression, plasma. Synthesized by the fetal liver and yolk sac.

It is found in the secreted. Binds copper, nickel, and fatty acids as well as, and bilirubin less well than, serum albumin. In Pan troglodytes (Chimpanzee), this protein is Alpha-fetoprotein (AFP).